Reading from the N-terminus, the 936-residue chain is Aconitate hydratase A (936 aa).

The interval Val401–Thr449 is disordered. The span at Thr412–Thr422 shows a compositional bias: polar residues. [4Fe-4S] cluster-binding residues include Cys472, Cys538, and Cys541.

This sequence belongs to the aconitase/IPM isomerase family. As to quaternary structure, monomer. Requires [4Fe-4S] cluster as cofactor.

The catalysed reaction is citrate = D-threo-isocitrate. It catalyses the reaction (2S,3R)-3-hydroxybutane-1,2,3-tricarboxylate = 2-methyl-cis-aconitate + H2O. The protein operates within carbohydrate metabolism; tricarboxylic acid cycle; isocitrate from oxaloacetate: step 2/2. Its pathway is organic acid metabolism; propanoate degradation. Functionally, involved in the catabolism of short chain fatty acids (SCFA) via the tricarboxylic acid (TCA)(acetyl degradation route) and probably via the 2-methylcitrate cycle I (propionate degradation route). Catalyzes the reversible isomerization of citrate to isocitrate via cis-aconitate. Could catalyze the hydration of 2-methyl-cis-aconitate to yield (2R,3S)-2-methylisocitrate. The apo form of AcnA functions as a RNA-binding regulatory protein. In Corynebacterium jeikeium (strain K411), this protein is Aconitate hydratase A (acn).